The primary structure comprises 452 residues: Pup--protein ligase (452 aa).

Residue glutamate 9 participates in Mg(2+) binding. Position 53 (arginine 53) interacts with ATP. Residue tyrosine 55 coordinates Mg(2+). Residue aspartate 57 is the Proton acceptor of the active site. Glutamate 63 serves as a coordination point for Mg(2+). ATP contacts are provided by threonine 66 and tryptophan 419.

It belongs to the Pup ligase/Pup deamidase family. Pup-conjugating enzyme subfamily.

The catalysed reaction is ATP + [prokaryotic ubiquitin-like protein]-L-glutamate + [protein]-L-lysine = ADP + phosphate + N(6)-([prokaryotic ubiquitin-like protein]-gamma-L-glutamyl)-[protein]-L-lysine.. Its pathway is protein degradation; proteasomal Pup-dependent pathway. The protein operates within protein modification; protein pupylation. In terms of biological role, catalyzes the covalent attachment of the prokaryotic ubiquitin-like protein modifier Pup to the proteasomal substrate proteins, thereby targeting them for proteasomal degradation. This tagging system is termed pupylation. The ligation reaction involves the side-chain carboxylate of the C-terminal glutamate of Pup and the side-chain amino group of a substrate lysine. The protein is Pup--protein ligase of Mycolicibacterium vanbaalenii (strain DSM 7251 / JCM 13017 / BCRC 16820 / KCTC 9966 / NRRL B-24157 / PYR-1) (Mycobacterium vanbaalenii).